The primary structure comprises 274 residues: uncharacterized protein (274 aa).

A helical transmembrane segment spans residues 238–258; sequence ILSVQVIFATVIALIAISVFC.

The protein localises to the membrane. This is an uncharacterized protein from Schizosaccharomyces pombe (strain 972 / ATCC 24843) (Fission yeast).